The sequence spans 447 residues: Argininosuccinate synthase (447 aa).

ATP is bound by residues 20-28 and Ala46; that span reads AFSGGLDTS. Tyr102 is an L-citrulline binding site. Positions 132 and 134 each coordinate ATP. Positions 134, 138, and 139 each coordinate L-aspartate. Asn138 is a binding site for L-citrulline. Asp139 is a binding site for ATP. The L-citrulline site is built by Arg142 and Ser195. Residue Asp197 participates in ATP binding. Positions 204, 206, and 283 each coordinate L-citrulline.

It belongs to the argininosuccinate synthase family. Type 2 subfamily. In terms of assembly, homotetramer.

The protein resides in the cytoplasm. It catalyses the reaction L-citrulline + L-aspartate + ATP = 2-(N(omega)-L-arginino)succinate + AMP + diphosphate + H(+). Its pathway is amino-acid biosynthesis; L-arginine biosynthesis; L-arginine from L-ornithine and carbamoyl phosphate: step 2/3. In Neisseria gonorrhoeae (strain ATCC 700825 / FA 1090), this protein is Argininosuccinate synthase.